Reading from the N-terminus, the 279-residue chain is Thermitase (279 aa).

Asp5 lines the Ca(2+) pocket. The 266-residue stretch at 12 to 277 folds into the Peptidase S8 domain; it reads QYGPQKIQAP…KGRVNAYKAV (266 aa). The active-site Charge relay system is the Asp38. Residues Asp47, Asp57, Asp60, Asp62, Thr64, and Gln66 each coordinate Ca(2+). The active-site Charge relay system is His71. The Ca(2+) site is built by Val82, Asn85, Thr87, and Ile89. Ala173, Tyr175, and Ala178 together coordinate Na(+). Ca(2+) is bound by residues Val199 and Asp201. Residue Asp201 participates in Na(+) binding. Catalysis depends on Ser225, which acts as the Charge relay system.

This sequence belongs to the peptidase S8 family. Ca(2+) serves as cofactor. It depends on Na(+) as a cofactor.

Its subcellular location is the secreted. It catalyses the reaction Hydrolysis of proteins, including collagen.. The polypeptide is Thermitase (Thermoactinomyces vulgaris).